The following is a 478-amino-acid chain: MGKLLVVMLIGMFLAFESLEALDYGDALNKSILFFEGQRSGKLPTNQRVKWRADSGLSDGASANVNLIGGYYDAGDNVKFVWPMSFTTTLLSWAALEYQNEITFVNQLGYLRSTIKWGTNFILRAHTSTNMLYTQVGDGNSDHSCWERPEDMDTPRTLYSISSSSPGSEAAGEAAAALAAASLVFKLVDSTYSSKLLNNAKSLFEFADKYRGSYQASCPFYCSHSGYQDELLWAAAWLYKATGEKSYLNYVISNKDWSKAINEFSWDNKFAGVQALLASEFYNGANDLEKFKTDVESFVCALMPGSSSQQIKPTPGGILFIRDSSNLQYVTTATTILFYYSKTLTKAGVGSIQCGSTQFTVSQIRNFAKSQVDYILGNNPLKMSYMVGFGTKYPTQPHHRGSSLPSIQSKPEKIDCNGGFSYYNFDTPNPNVHTGAIVGGPNSSDQYSDKRTDYSHAEPTTYINAAFIGSVAALISSS.

An N-terminal signal peptide occupies residues 1-21 (MGKLLVVMLIGMFLAFESLEA). N-linked (GlcNAc...) asparagine glycosylation is present at Asn29. The Nucleophile role is filled by Asp76. The active site involves His398. The disordered stretch occupies residues 433–452 (HTGAIVGGPNSSDQYSDKRT). Residue Asn442 is glycosylated (N-linked (GlcNAc...) asparagine). Catalysis depends on residues Asp449 and Glu458.

Belongs to the glycosyl hydrolase 9 (cellulase E) family.

Its subcellular location is the secreted. The catalysed reaction is Endohydrolysis of (1-&gt;4)-beta-D-glucosidic linkages in cellulose, lichenin and cereal beta-D-glucans.. In Arabidopsis thaliana (Mouse-ear cress), this protein is Endoglucanase 18.